Here is a 2475-residue protein sequence, read N- to C-terminus: MGNRGSSTSSRPPPSSEANIYAKLQDHIQRQTRPFSGGGYFNGGGDKNPVQHIKDYHIDSVSSKAKLRIIEGIIRAIAKIGFKVDTKQPIEDILKDIKKQLPDPRAGSTFVKNAEKQETVCKMIADAINQEFIDLGQDKLIDTTEGAASICRQIVLYINSLTHGLRAEYLDVHGSIENTLENIKLLNDAIKQLHERMVTEVTKAAPNEEVINAVTMIEAVYRRLLNEQNLQINILTNFIDNILTPTQKELDKLQTDEVDIIKLLNDTNSVLGTKNFGKVLSYTLCNLGIAASVANKINKALQKVGLKVEQYLQSKNWEEFDKELDLKRFSGLVSAENIAEFEKAVNLLRQTFNERHKILENSCAKKGGDEEKTPLDRRIEAQRLDRKHILMEFLNKSTQAYNDFLENVKKIGIKLVKEIALTPNITRLRDALSRINDMGTIALDLSLIGFYTNAAAREERETFLTQFMLVKNVLEEQSKTDPNFKNLYDSCSRLLQIIDFYTDIVQKKYGGEEDCECTRVGGAALTVEELGLSKAARSQVDLNQAINTFMYYYYVAQIYSNLTHNKQEFQSYEENYATILGDAIAGRLMQLDTEKNARINSPAVDLARGHVGPNPGGAQEVDWKAAVSAIELEYDVKRRFYRALEGLDLYLKNITKTFVNNIDSIQTVQQMLDGVRIIGRWFTEATGDTLAQVFESFPTSAGNDSNVFTDNAPAGHYYEKVAAEIQQGRSVGTLRPVRASQAKNIRDLIGRSLSNFQALKNIINAFARIGDMLGGEELRQMVPMSPLQIYKTLLEYIQHSALSVGLKNLNQSEIGGQRVALARTPEEAAQRVYLSTVRVNDALSTRWETEDVFFTFMLKSMAAKIFIVLGIYDMFERPEPVYKLIPTRMILGGADELEPEVIPEAAELYFRLPRLAEFYQKLFSFRDENVQISMLPELEGIFSGLIRIIFMRPIELINIGDYSETEIRQLIKEINVIYQHFNLEYGEQEATKKALIHFVNEINRRFGVITRTEWEKFQRIVQEARTMNDFGMMNQTNYSILPDEDGYTQSSQLLPSDRFISPSSQPTPKWRPALYNIDSVDVQTGMLQPNSQWDLVQKFRKQLSEMFEDPSLQQELGKVSYQELIRQAINELKKDHTDKIQIVSKLIQGSESLADTDVNKIFLFHETVITGLNLLSAIYVLLNNFRNNIKGLDLDTIQKSIIEWLRETPANVNHANLIDWLGRKHGAISEIRNPGLVIKEINMRLSEVYPDPTTEANVPQDRNLTTETLFAWIVPYVGIPAGGGVRAEQELAARYLVDNQRIMQLLLTNIFEMTSSFNKMVQVRFPETSTAQVHLDFTGLISLIDSLMADTKYFLNLLRPHIDKNIIQYYENRSNPGSFYWLEEHLIDKLIKPPTDAGGRPLPGGELGLEGVNQIINKTYTLLTKPYNVLQLRGGAQRRDAANIQINNNPQPSERFEQYGRVFSRLVFYDALENNSGLRVEQVVLGDFRLSNLIRTNNAQEENALSYWDNIALRTYANVNDAANNLRRYRLYGSDHGIQNNRSMMMVFNQLVASYIARFYDAPSGKIYLNLINAFANGNFSQAVMEMGYAHPDLARNNNAFGHRGDPTEQSVLLLSLGLILQRLIKDTNRQGLSQHLISTLTEIPIYLKENYRANLPLFNKMFNILISQGELLKQFIQYTNVQLARPNLTALLGANNDSVIYYNNNINVPMTGLSVGQAAMRGIGGVFRPNVTLMPLGDAQSNTSDIVRKRLVAVIDGIIRGSHTLADSAMEVLHELTDHPIYLETEEHFIQNYMSRYNKEPLMPFSLSLYYLRDLRIENNEVYDPLLYPNLESGSPEFKLLYGTRKLLGNDPVQLSDMPGVQLIMKNYNETVVAREQITPTRFEHFYTHAIQALRFIINIRSFKTVMMYNENTFGGVNLISENRDDKPIITAGIGMNAVYSLRKTLQDVISFVESSYQEEQINHIHKIVSPKGQTRTLGSNRERERIFNLFDMNIIPINVNALMRSIPLANIYNYDYSFEEIACLMYGISAEKVRSLNTAAPQPDIAEVLNIPNRPPMNTREFMLKLLINPYVSVSITQYGNELLSKGNAGYMSRIFRGDNALNMGRPKFLSDQIFNKVLFGSLYPTQFDYDEAGPSLAAGIQRGRERWGHPMSIYINQALHEIVRTIRLAETVRGLRNVIDRNQIIGELNAFRTQLEDTRREVNNLIQTPEIRNNPTPEIIAAVQNWGQQYRGQITDLIDLIGNVGQANSMINLIQNITPQTAGAQLIALFNIRGLPAPPPRQVIQNDIEAMQWFMTMVINHPPILIAPFMLLVNNLKEFLNTLERYVYKTPRWLGPGTARIAQPPVGMAPGINMRHHTSYTENSVLTYITEQNREEGPWSIVKQVGVGIQKPTLVQIGKDRFDTRLIRNLIFITNIQRLLRLRLNLELSQFRNVLVSPDHIINPSITEYGFSITGPSETFSDKQYDSDIRIL.

Gly-2 carries N-myristoyl glycine; by host lipidation. The stretch at 2184 to 2211 (RNQIIGELNAFRTQLEDTRREVNNLIQT) forms a coiled coil.

The protein belongs to the asfivirus polyprotein pp220 family. In terms of processing, specific enzymatic cleavages in vivo by the viral pS273R protease yield mature proteins.

Its subcellular location is the host cytoplasm. The protein resides in the host perinuclear region. It localises to the virion. It is found in the host nucleus. Essential for the core assembly. Its myristoyl moiety may function as a membrane-anchoring signal to bind the developing core shell to the inner viral envelope. Its function is as follows. The structural protein p34 is a component of the virus core shell. In terms of biological role, the structural protein p14 is a component of the virus core shell. Functionally, the structural protein p37 is a component of the virus core shell. The structural protein p150 is a component of the virus core shell. In African swine fever virus (isolate Tick/South Africa/Pretoriuskop Pr4/1996) (ASFV), this protein is Polyprotein pp220.